Reading from the N-terminus, the 330-residue chain is Putative aminohydrolase AF_1775 (330 aa).

4 residues coordinate Zn(2+): histidine 54, histidine 56, histidine 181, and aspartate 253.

It belongs to the metallo-dependent hydrolases superfamily. ATZ/TRZ family.

The chain is Putative aminohydrolase AF_1775 from Archaeoglobus fulgidus (strain ATCC 49558 / DSM 4304 / JCM 9628 / NBRC 100126 / VC-16).